Reading from the N-terminus, the 289-residue chain is Lipoyl synthase (289 aa).

Positions 33, 38, 44, 59, 63, 66, and 274 each coordinate [4Fe-4S] cluster. In terms of domain architecture, Radical SAM core spans 45-263 (FAGGTATFLI…SQGESELGFL (219 aa)).

It belongs to the radical SAM superfamily. Lipoyl synthase family. [4Fe-4S] cluster serves as cofactor.

Its subcellular location is the cytoplasm. The catalysed reaction is [[Fe-S] cluster scaffold protein carrying a second [4Fe-4S](2+) cluster] + N(6)-octanoyl-L-lysyl-[protein] + 2 oxidized [2Fe-2S]-[ferredoxin] + 2 S-adenosyl-L-methionine + 4 H(+) = [[Fe-S] cluster scaffold protein] + N(6)-[(R)-dihydrolipoyl]-L-lysyl-[protein] + 4 Fe(3+) + 2 hydrogen sulfide + 2 5'-deoxyadenosine + 2 L-methionine + 2 reduced [2Fe-2S]-[ferredoxin]. The protein operates within protein modification; protein lipoylation via endogenous pathway; protein N(6)-(lipoyl)lysine from octanoyl-[acyl-carrier-protein]: step 2/2. Catalyzes the radical-mediated insertion of two sulfur atoms into the C-6 and C-8 positions of the octanoyl moiety bound to the lipoyl domains of lipoate-dependent enzymes, thereby converting the octanoylated domains into lipoylated derivatives. This chain is Lipoyl synthase, found in Synechococcus sp. (strain RCC307).